A 426-amino-acid chain; its full sequence is Hemojuvelin (426 aa).

Residues 1-35 (MGEPGQSPSPRSSHGSPPTLSTLTLLLLLCGHAHS) form the signal peptide. Tyrosine 46 is subject to Phosphotyrosine. Residue asparagine 118 is glycosylated (N-linked (GlcNAc...) asparagine). Positions 119-142 (CSRQGPTAPPPPRGPALPGAGSGL) are disordered. 2 disulfide bridges follow: cysteine 148–cysteine 230 and cysteine 167–cysteine 317. Residues asparagine 213 and asparagine 372 are each glycosylated (N-linked (GlcNAc...) asparagine). A lipid anchor (GPI-anchor amidated aspartate) is attached at aspartate 400. Residues 401 to 426 (AGVPLSSATLLAPLLSGLFVLWLCIQ) constitute a propeptide, removed in mature form.

This sequence belongs to the repulsive guidance molecule (RGM) family. As to quaternary structure, interacts with BMP2 and BMP4. Interacts with BMP6. Interacts with BMPR1B. Interacts with TMPRSS6. In terms of processing, autocatalytically cleaved at low pH; the two chains remain linked via two disulfide bonds. Also proteolytically processed by TMPRSS6, several fragments being released in the extracellular space; regulates HJV activity in BMP signaling and thefore iron homeostasis. In terms of tissue distribution, adult and fetal liver, heart, and skeletal muscle.

It is found in the cell membrane. In terms of biological role, acts as a bone morphogenetic protein (BMP) coreceptor. Through enhancement of BMP signaling regulates hepcidin (HAMP) expression and regulates iron homeostasis. The protein is Hemojuvelin of Homo sapiens (Human).